The primary structure comprises 387 residues: Enoyl-[acyl-carrier-protein] reductase 2, mitochondrial (387 aa).

The transit peptide at 1-23 directs the protein to the mitochondrion; the sequence is MYRNQLARASLRSTSSINQIRNM. Catalysis depends on Y79, which acts as the Proton donor. NADP(+)-binding positions include N172, 199–202, 222–224, 297–300, 322–324, and K382; these read NSAV, RDR, YGGM, and FWV.

The protein belongs to the zinc-containing alcohol dehydrogenase family. Quinone oxidoreductase subfamily. In terms of assembly, homodimer.

It localises to the mitochondrion matrix. The enzyme catalyses a 2,3-saturated acyl-[ACP] + NADP(+) = a (2E)-enoyl-[ACP] + NADPH + H(+). Catalyzes the NADPH-dependent reduction of trans-2-enoyl thioesters in mitochondrial fatty acid synthesis (fatty acid synthesis type II). Fatty acid chain elongation in mitochondria uses acyl carrier protein (ACP) as an acyl group carrier, but the enzyme accepts both ACP and CoA thioesters as substrates in vitro. Required for respiration and the maintenance of the mitochondrial compartment. This is Enoyl-[acyl-carrier-protein] reductase 2, mitochondrial (ETR2) from Debaryomyces hansenii (strain ATCC 36239 / CBS 767 / BCRC 21394 / JCM 1990 / NBRC 0083 / IGC 2968) (Yeast).